The primary structure comprises 197 residues: 3-isopropylmalate dehydratase small subunit (197 aa).

The protein belongs to the LeuD family. LeuD type 1 subfamily. In terms of assembly, heterodimer of LeuC and LeuD.

It carries out the reaction (2R,3S)-3-isopropylmalate = (2S)-2-isopropylmalate. It functions in the pathway amino-acid biosynthesis; L-leucine biosynthesis; L-leucine from 3-methyl-2-oxobutanoate: step 2/4. Its function is as follows. Catalyzes the isomerization between 2-isopropylmalate and 3-isopropylmalate, via the formation of 2-isopropylmaleate. The polypeptide is 3-isopropylmalate dehydratase small subunit (leuD) (Streptomyces coelicolor (strain ATCC BAA-471 / A3(2) / M145)).